Consider the following 145-residue polypeptide: Protein SprT-like (145 aa).

A SprT-like domain is found at 5–140 (DYVREVSLAD…ACGRCHGRLI (136 aa)). Position 64 (H64) interacts with Zn(2+). Residue E65 is part of the active site. Residue H68 participates in Zn(2+) binding.

This sequence belongs to the SprT family. It depends on Zn(2+) as a cofactor.

It localises to the cytoplasm. The protein is Protein SprT-like of Streptococcus equi subsp. equi (strain 4047).